The chain runs to 678 residues: Macrolide export ATP-binding/permease protein MacB 1 (678 aa).

One can recognise an ABC transporter domain in the interval 11-249; sequence LRLENVSREF…PKMVDIPSVI (239 aa). Position 47-54 (47-54) interacts with ATP; sequence GTSGSGKS. 4 helical membrane-spanning segments follow: residues 303 to 323, 558 to 578, 608 to 628, and 641 to 661; these read ALTM…VALG, IAVI…LVSV, LVCL…GLLF, and AASI…FGFF.

This sequence belongs to the ABC transporter superfamily. Macrolide exporter (TC 3.A.1.122) family. Homodimer. Part of the tripartite efflux system MacAB-TolC, which is composed of an inner membrane transporter, MacB, a periplasmic membrane fusion protein, MacA, and an outer membrane component, TolC. The complex forms a large protein conduit and can translocate molecules across both the inner and outer membranes. Interacts with MacA.

It localises to the cell inner membrane. In terms of biological role, part of the tripartite efflux system MacAB-TolC. MacB is a non-canonical ABC transporter that contains transmembrane domains (TMD), which form a pore in the inner membrane, and an ATP-binding domain (NBD), which is responsible for energy generation. Confers resistance against macrolides. The polypeptide is Macrolide export ATP-binding/permease protein MacB 1 (Yersinia pestis bv. Antiqua (strain Nepal516)).